The chain runs to 86 residues: uncharacterized protein (86 aa).

This is an uncharacterized protein from Ovis aries (Sheep).